A 282-amino-acid chain; its full sequence is Ribosome-inactivating protein bryodin II (282 aa).

A signal peptide spans 1 to 21 (MRSIGFYSVLALYVGAHVTED). Asn-25 carries an N-linked (GlcNAc...) asparagine glycan. Glu-183 is a catalytic residue.

The protein belongs to the ribosome-inactivating protein family. Type 1 RIP subfamily.

It carries out the reaction Endohydrolysis of the N-glycosidic bond at one specific adenosine on the 28S rRNA.. Functionally, ribosome-inactivating protein of type 1, inhibits protein synthesis in animal cells. This chain is Ribosome-inactivating protein bryodin II, found in Bryonia dioica (Red bryony).